A 256-amino-acid chain; its full sequence is Imidazole glycerol phosphate synthase subunit HisF (256 aa).

Active-site residues include Asp-12 and Asp-131.

Belongs to the HisA/HisF family. In terms of assembly, heterodimer of HisH and HisF.

Its subcellular location is the cytoplasm. The enzyme catalyses 5-[(5-phospho-1-deoxy-D-ribulos-1-ylimino)methylamino]-1-(5-phospho-beta-D-ribosyl)imidazole-4-carboxamide + L-glutamine = D-erythro-1-(imidazol-4-yl)glycerol 3-phosphate + 5-amino-1-(5-phospho-beta-D-ribosyl)imidazole-4-carboxamide + L-glutamate + H(+). Its pathway is amino-acid biosynthesis; L-histidine biosynthesis; L-histidine from 5-phospho-alpha-D-ribose 1-diphosphate: step 5/9. Its function is as follows. IGPS catalyzes the conversion of PRFAR and glutamine to IGP, AICAR and glutamate. The HisF subunit catalyzes the cyclization activity that produces IGP and AICAR from PRFAR using the ammonia provided by the HisH subunit. In Pseudomonas syringae pv. tomato (strain ATCC BAA-871 / DC3000), this protein is Imidazole glycerol phosphate synthase subunit HisF.